Reading from the N-terminus, the 518-residue chain is MNELQTKVNEANNIFPVEAFKVPKVPEKLFGFVNQGFFPKLNPKGLNIADNVASLFEQYSLKQASLKDFDILLEKKNDIVLEHKVRYNFALQFHFETTYVGTGGEINLQFALQASTTNFSSLEELQASFSKTGDNLTAQLFWKPTVTKLVSGENDLTHIAQTAIGESLFDSRVDLSASIINSEATLKTAEATFTTQVLNPFKAEREKALAIKKAEEEKIKKELEEQKKRQEELSKQQRDKEALQKSLWNFQEFISYWTGQGKDVKQKEQFIQALEAAFSTNWNEVFNLLIAGFRSAIQTYYKDGKADQSQNAKIAFGEKGIQFPKSGPGLDGIFMSDFLRGNLTGNAHFDLKLKKVEVKNTQGKDAQGNDKKASINWQAKQNNFPFRQVNPWDFSFEVELKYEGSYGLYPGARFLNLFGSLGIPNDWKGEMSVKFVLDGKTPQWIADKPDYPGSLFKFEKNQLKFTPHVKEHVHVENKQFMEKLKSQNLHNLELATGATKPPVVDLASYLHYLILNHK.

The protein belongs to the MG032/MG096/MG288 family.

This is an uncharacterized protein from Mycoplasma pneumoniae (strain ATCC 29342 / M129 / Subtype 1) (Mycoplasmoides pneumoniae).